The sequence spans 499 residues: FAD-dependent oxidoreductase domain-containing protein 1 (499 aa).

The helical transmembrane segment at 75-95 (ERADVVIVGGGVMGWSIAYWL) threads the bilayer.

FAD is required as a cofactor.

It localises to the mitochondrion inner membrane. Required for the assembly of the mitochondrial membrane respiratory chain NADH dehydrogenase (Complex I). Involved in mid-late stages of complex I assembly. This Xenopus laevis (African clawed frog) protein is FAD-dependent oxidoreductase domain-containing protein 1 (foxred1).